The sequence spans 474 residues: 3-isopropylmalate dehydratase large subunit (474 aa).

The [4Fe-4S] cluster site is built by Cys355, Cys415, and Cys418.

Belongs to the aconitase/IPM isomerase family. LeuC type 1 subfamily. As to quaternary structure, heterodimer of LeuC and LeuD. It depends on [4Fe-4S] cluster as a cofactor.

The enzyme catalyses (2R,3S)-3-isopropylmalate = (2S)-2-isopropylmalate. The protein operates within amino-acid biosynthesis; L-leucine biosynthesis; L-leucine from 3-methyl-2-oxobutanoate: step 2/4. Its function is as follows. Catalyzes the isomerization between 2-isopropylmalate and 3-isopropylmalate, via the formation of 2-isopropylmaleate. The protein is 3-isopropylmalate dehydratase large subunit of Shewanella oneidensis (strain ATCC 700550 / JCM 31522 / CIP 106686 / LMG 19005 / NCIMB 14063 / MR-1).